Here is a 637-residue protein sequence, read N- to C-terminus: Anthranilate synthase, phenazine specific (637 aa).

The interval 1–434 is anthranilate synthase component I; that stretch reads MSQAAARLME…QRQQTQSDFS (434 aa). The 192-residue stretch at 437-628 folds into the Glutamine amidotransferase type-1 domain; sequence QVLIVDAEDT…LRHALIHTPV (192 aa). Active-site for GATase activity residues include cysteine 517, histidine 602, and glutamate 604.

The enzyme catalyses chorismate + L-glutamine = anthranilate + pyruvate + L-glutamate + H(+). It functions in the pathway antibiotic biosynthesis; phenazine biosynthesis. Its function is as follows. Involved in the biosynthesis of the antibiotic, phenazine, a nitrogen-containing heterocyclic molecule having important roles in virulence, competition and biological control. The polypeptide is Anthranilate synthase, phenazine specific (phzE) (Pseudomonas fluorescens).